The chain runs to 170 residues: Small ribosomal subunit protein uS4 (170 aa).

The region spanning 100 to 164 (RRLQTVVYRE…SDLTDELHPA (65 aa)) is the S4 RNA-binding domain.

This sequence belongs to the universal ribosomal protein uS4 family. As to quaternary structure, part of the 30S ribosomal subunit. Contacts protein S5. The interaction surface between S4 and S5 is involved in control of translational fidelity.

One of the primary rRNA binding proteins, it binds directly to 16S rRNA where it nucleates assembly of the body of the 30S subunit. Its function is as follows. With S5 and S12 plays an important role in translational accuracy. This is Small ribosomal subunit protein uS4 from Halobacterium salinarum (strain ATCC 29341 / DSM 671 / R1).